The following is a 110-amino-acid chain: uncharacterized protein (110 aa).

3 helical membrane passes run L4–N26, A46–L68, and L72–T91.

Its subcellular location is the cell membrane. This is an uncharacterized protein from Bacillus subtilis (strain 168).